Here is a 214-residue protein sequence, read N- to C-terminus: N-(5'-phosphoribosyl)anthranilate isomerase (214 aa).

The protein belongs to the TrpF family.

It carries out the reaction N-(5-phospho-beta-D-ribosyl)anthranilate = 1-(2-carboxyphenylamino)-1-deoxy-D-ribulose 5-phosphate. The protein operates within amino-acid biosynthesis; L-tryptophan biosynthesis; L-tryptophan from chorismate: step 3/5. The chain is N-(5'-phosphoribosyl)anthranilate isomerase from Rhodospirillum centenum (strain ATCC 51521 / SW).